Reading from the N-terminus, the 159-residue chain is RNA pyrophosphohydrolase (159 aa).

Residues 6 to 149 enclose the Nudix hydrolase domain; sequence GYRPNVGIVI…KRNVYRRMMK (144 aa). Positions 38–59 match the Nudix box motif; that stretch reads GGINSGETAEQAMFRELFEEVG.

Belongs to the Nudix hydrolase family. RppH subfamily. It depends on a divalent metal cation as a cofactor.

In terms of biological role, accelerates the degradation of transcripts by removing pyrophosphate from the 5'-end of triphosphorylated RNA, leading to a more labile monophosphorylated state that can stimulate subsequent ribonuclease cleavage. This chain is RNA pyrophosphohydrolase, found in Baumannia cicadellinicola subsp. Homalodisca coagulata.